Reading from the N-terminus, the 424-residue chain is Virion nicking-joining enzyme (424 aa).

PLD phosphodiesterase domains lie at 110-137 (LGGV…DWRS) and 320-346 (YSRV…TGNY).

This sequence belongs to the orthopoxvirus OPG042 family.

Its subcellular location is the virion. DNA nicking enzyme that cleaves extruded cruciform DNA at its tip. Probably nicks viral hairpins. The protein is Virion nicking-joining enzyme (OPG042) of Vaccinia virus (strain Western Reserve) (VACV).